We begin with the raw amino-acid sequence, 415 residues long: Ubp4-interactor sfp47 (415 aa).

S221 and S226 each carry phosphoserine. T231 carries the phosphothreonine modification. At S235 the chain carries Phosphoserine. One can recognise an SH3 domain in the interval 352-415 (PIFAYVRALY…PSNYIEELEY (64 aa)).

As to quaternary structure, interacts with ubp4.

It localises to the cytoplasm. The protein localises to the endosome. Its function is as follows. Required for the regulation of activity and recruitment of ubp4 to endosomes. This is Ubp4-interactor sfp47 (sfp47) from Schizosaccharomyces pombe (strain 972 / ATCC 24843) (Fission yeast).